A 285-amino-acid polypeptide reads, in one-letter code: MHIIKTIKVLYKEIKILKKSNKKIGLVPTMGNLHDGHIKLILLAKKYSDIIIVSIFINPMQFDNLSDLKNYPKTFMKDSIILKKYHVDILFFPHINEIYPNGIEHQTFVEVIKLSKILEGQSRPGHFRGVTTIITKLFNFIQPDFAFFGEKDYQQLLIIKILVKELNYMIKIISLPTIRLKNGLALSSRNNYLSSQENEIAPYLYKIIKKTCEKIIKEDDNIRPKIIHESKILLIKKGFSVDIFDIYDYKNLEHPSKKVKKVILLASVWLGNTRLIDNKKIILNY.

M30–H37 provides a ligand contact to ATP. Residue H37 is the Proton donor of the active site. Q61 serves as a coordination point for (R)-pantoate. Q61 serves as a coordination point for beta-alanine. G149–D152 contacts ATP. Q155 provides a ligand contact to (R)-pantoate. ATP is bound by residues I178 and L186–R189.

It belongs to the pantothenate synthetase family. In terms of assembly, homodimer.

Its subcellular location is the cytoplasm. It carries out the reaction (R)-pantoate + beta-alanine + ATP = (R)-pantothenate + AMP + diphosphate + H(+). It functions in the pathway cofactor biosynthesis; (R)-pantothenate biosynthesis; (R)-pantothenate from (R)-pantoate and beta-alanine: step 1/1. In terms of biological role, catalyzes the condensation of pantoate with beta-alanine in an ATP-dependent reaction via a pantoyl-adenylate intermediate. The chain is Pantothenate synthetase from Buchnera aphidicola subsp. Acyrthosiphon pisum (strain 5A).